Reading from the N-terminus, the 144-residue chain is Large ribosomal subunit protein uL11 (144 aa).

It belongs to the universal ribosomal protein uL11 family. In terms of assembly, part of the ribosomal stalk of the 50S ribosomal subunit. Interacts with L10 and the large rRNA to form the base of the stalk. L10 forms an elongated spine to which L12 dimers bind in a sequential fashion forming a multimeric L10(L12)X complex. In terms of processing, one or more lysine residues are methylated.

Its function is as follows. Forms part of the ribosomal stalk which helps the ribosome interact with GTP-bound translation factors. The sequence is that of Large ribosomal subunit protein uL11 from Corynebacterium efficiens (strain DSM 44549 / YS-314 / AJ 12310 / JCM 11189 / NBRC 100395).